The chain runs to 294 residues: Phosphatidylserine decarboxylase proenzyme (294 aa).

Active-site charge relay system; for autoendoproteolytic cleavage activity residues include Asp100, His157, and Ser261. Residue Ser261 is the Schiff-base intermediate with substrate; via pyruvic acid; for decarboxylase activity of the active site. Residue Ser261 is modified to Pyruvic acid (Ser); by autocatalysis.

It belongs to the phosphatidylserine decarboxylase family. PSD-B subfamily. Prokaryotic type I sub-subfamily. In terms of assembly, heterodimer of a large membrane-associated beta subunit and a small pyruvoyl-containing alpha subunit. Pyruvate serves as cofactor. Is synthesized initially as an inactive proenzyme. Formation of the active enzyme involves a self-maturation process in which the active site pyruvoyl group is generated from an internal serine residue via an autocatalytic post-translational modification. Two non-identical subunits are generated from the proenzyme in this reaction, and the pyruvate is formed at the N-terminus of the alpha chain, which is derived from the carboxyl end of the proenzyme. The autoendoproteolytic cleavage occurs by a canonical serine protease mechanism, in which the side chain hydroxyl group of the serine supplies its oxygen atom to form the C-terminus of the beta chain, while the remainder of the serine residue undergoes an oxidative deamination to produce ammonia and the pyruvoyl prosthetic group on the alpha chain. During this reaction, the Ser that is part of the protease active site of the proenzyme becomes the pyruvoyl prosthetic group, which constitutes an essential element of the active site of the mature decarboxylase.

The protein resides in the cell membrane. The catalysed reaction is a 1,2-diacyl-sn-glycero-3-phospho-L-serine + H(+) = a 1,2-diacyl-sn-glycero-3-phosphoethanolamine + CO2. The protein operates within phospholipid metabolism; phosphatidylethanolamine biosynthesis; phosphatidylethanolamine from CDP-diacylglycerol: step 2/2. In terms of biological role, catalyzes the formation of phosphatidylethanolamine (PtdEtn) from phosphatidylserine (PtdSer). The sequence is that of Phosphatidylserine decarboxylase proenzyme from Mannheimia succiniciproducens (strain KCTC 0769BP / MBEL55E).